The following is a 62-amino-acid chain: Keratin-associated protein 19-5 (62 aa).

The segment at 5–56 (GSYYGGLGSGIRGFGNLGYGYGCGCGFGGYGYGSGYGRYGYGYPRPLYYGGY) is 14 X 2 AA repeats of G-[YCGS].

Belongs to the KRTAP type 19 family. Interacts with hair keratins. Expressed in skin during two hair growth cycles. Expression restricted to the cortical cells of hair follicles, appearing first in the cortical cells processing the flat nuclei located a few cells above the dermal papilla.

Functionally, in the hair cortex, hair keratin intermediate filaments are embedded in an interfilamentous matrix, consisting of hair keratin-associated proteins (KRTAP), which are essential for the formation of a rigid and resistant hair shaft through their extensive disulfide bond cross-linking with abundant cysteine residues of hair keratins. The matrix proteins include the high-sulfur and high-glycine-tyrosine keratins. The polypeptide is Keratin-associated protein 19-5 (Krtap19-5) (Mus musculus (Mouse)).